The chain runs to 81 residues: Photosystem I iron-sulfur center (81 aa).

2 consecutive 4Fe-4S ferredoxin-type domains span residues 2–31 (SHSVRVYDTCIGCTQCVRACPCDVLEMVPW) and 39–68 (IASAPRAEDCIGCKRCETACPTDFLSVRVY). Residues Cys11, Cys14, Cys17, Cys21, Cys48, Cys51, Cys54, and Cys58 each contribute to the [4Fe-4S] cluster site.

As to quaternary structure, the eukaryotic PSI reaction center is composed of at least 11 subunits. [4Fe-4S] cluster is required as a cofactor.

It localises to the plastid. Its subcellular location is the chloroplast thylakoid membrane. The catalysed reaction is reduced [plastocyanin] + hnu + oxidized [2Fe-2S]-[ferredoxin] = oxidized [plastocyanin] + reduced [2Fe-2S]-[ferredoxin]. Apoprotein for the two 4Fe-4S centers FA and FB of photosystem I (PSI); essential for photochemical activity. FB is the terminal electron acceptor of PSI, donating electrons to ferredoxin. The C-terminus interacts with PsaA/B/D and helps assemble the protein into the PSI complex. Required for binding of PsaD and PsaE to PSI. PSI is a plastocyanin/cytochrome c6-ferredoxin oxidoreductase, converting photonic excitation into a charge separation, which transfers an electron from the donor P700 chlorophyll pair to the spectroscopically characterized acceptors A0, A1, FX, FA and FB in turn. This chain is Photosystem I iron-sulfur center, found in Emiliania huxleyi (Coccolithophore).